The chain runs to 294 residues: Bifunctional protein FolD (294 aa).

NADP(+)-binding positions include 164 to 166, serine 193, and isoleucine 234; that span reads GRS.

Belongs to the tetrahydrofolate dehydrogenase/cyclohydrolase family. As to quaternary structure, homodimer.

It catalyses the reaction (6R)-5,10-methylene-5,6,7,8-tetrahydrofolate + NADP(+) = (6R)-5,10-methenyltetrahydrofolate + NADPH. It carries out the reaction (6R)-5,10-methenyltetrahydrofolate + H2O = (6R)-10-formyltetrahydrofolate + H(+). It functions in the pathway one-carbon metabolism; tetrahydrofolate interconversion. Catalyzes the oxidation of 5,10-methylenetetrahydrofolate to 5,10-methenyltetrahydrofolate and then the hydrolysis of 5,10-methenyltetrahydrofolate to 10-formyltetrahydrofolate. This chain is Bifunctional protein FolD, found in Flavobacterium psychrophilum (strain ATCC 49511 / DSM 21280 / CIP 103535 / JIP02/86).